The following is a 293-amino-acid chain: Nucleotide-binding protein DvMF_0424 (293 aa).

13–20 provides a ligand contact to ATP; it reads GLSGAGKS. Residue 65–68 participates in GTP binding; the sequence is DLRE.

This sequence belongs to the RapZ-like family.

Displays ATPase and GTPase activities. The sequence is that of Nucleotide-binding protein DvMF_0424 from Nitratidesulfovibrio vulgaris (strain DSM 19637 / Miyazaki F) (Desulfovibrio vulgaris).